We begin with the raw amino-acid sequence, 59 residues long: Large ribosomal subunit protein uL30 (59 aa).

Belongs to the universal ribosomal protein uL30 family. As to quaternary structure, part of the 50S ribosomal subunit.

This chain is Large ribosomal subunit protein uL30, found in Mycobacterium sp. (strain JLS).